The primary structure comprises 394 residues: Anthocyanidin 3-O-glucosyltransferase 6 (394 aa).

D37 serves as the catalytic Charge relay. Residues T59, A267, Q269, H284, W287, N288, S289, and E292 each contribute to the UDP-alpha-D-glucose site. A307 serves as a coordination point for an anthocyanidin. Residues E308 and Q309 each contribute to the UDP-alpha-D-glucose site.

The protein belongs to the UDP-glycosyltransferase family. Expressed in cotyledons and leaves.

The catalysed reaction is an anthocyanidin + UDP-alpha-D-glucose + H(+) = an anthocyanidin 3-O-beta-D-glucoside + UDP. It functions in the pathway pigment biosynthesis; anthocyanin biosynthesis. In terms of biological role, in the presence of other necessary color factors, this glycosylation reaction allows the accumulation of anthocyanin pigments. May be involved in glycosylation of unstable cyanohydrins to produce stable cyanoglucosides. This chain is Anthocyanidin 3-O-glucosyltransferase 6 (GT6), found in Manihot esculenta (Cassava).